We begin with the raw amino-acid sequence, 111 residues long: Large ribosomal subunit protein P1 (111 aa).

Low complexity predominate over residues 65 to 89 (SGAGSGPAPAAAAAAPAAGGAAPAA). The interval 65–111 (SGAGSGPAPAAAAAAPAAGGAAPAAETKKKEEPKEESDDDMGFGLFD) is disordered.

It belongs to the eukaryotic ribosomal protein P1/P2 family. P1 and P2 exist as dimers at the large ribosomal subunit.

Plays an important role in the elongation step of protein synthesis. In Caenorhabditis elegans, this protein is Large ribosomal subunit protein P1.